Reading from the N-terminus, the 497-residue chain is Probable D-lactate dehydrogenase, mitochondrial (497 aa).

One can recognise an FAD-binding PCMH-type domain in the interval 65–246 (HRCRPPDVVV…TKATLRLYGV (182 aa)).

The protein belongs to the FAD-binding oxidoreductase/transferase type 4 family. The cofactor is FAD.

Its subcellular location is the mitochondrion. The enzyme catalyses (R)-lactate + 2 Fe(III)-[cytochrome c] = 2 Fe(II)-[cytochrome c] + pyruvate + 2 H(+). Its function is as follows. Involved in D-lactate, but not L-lactate catabolic process. This Danio rerio (Zebrafish) protein is Probable D-lactate dehydrogenase, mitochondrial (ldhd).